A 209-amino-acid polypeptide reads, in one-letter code: Imidazole glycerol phosphate synthase subunit HisH (209 aa).

The region spanning methionine 1–serine 205 is the Glutamine amidotransferase type-1 domain. The active-site Nucleophile is the cysteine 79. Catalysis depends on residues histidine 180 and glutamate 182.

Heterodimer of HisH and HisF.

It localises to the cytoplasm. The enzyme catalyses 5-[(5-phospho-1-deoxy-D-ribulos-1-ylimino)methylamino]-1-(5-phospho-beta-D-ribosyl)imidazole-4-carboxamide + L-glutamine = D-erythro-1-(imidazol-4-yl)glycerol 3-phosphate + 5-amino-1-(5-phospho-beta-D-ribosyl)imidazole-4-carboxamide + L-glutamate + H(+). It catalyses the reaction L-glutamine + H2O = L-glutamate + NH4(+). The protein operates within amino-acid biosynthesis; L-histidine biosynthesis; L-histidine from 5-phospho-alpha-D-ribose 1-diphosphate: step 5/9. Functionally, IGPS catalyzes the conversion of PRFAR and glutamine to IGP, AICAR and glutamate. The HisH subunit catalyzes the hydrolysis of glutamine to glutamate and ammonia as part of the synthesis of IGP and AICAR. The resulting ammonia molecule is channeled to the active site of HisF. The polypeptide is Imidazole glycerol phosphate synthase subunit HisH (Bacillus thuringiensis (strain Al Hakam)).